The sequence spans 491 residues: Katanin p60 ATPase-containing subunit A1 (491 aa).

The segment at 1-29 (MSLLMITENVKLAREYALLGNYDSAMVYY) is interaction with KATNB1. Residues 1–75 (MSLLMITENV…VKEIMKTLES (75 aa)) are interaction with dynein and NDEL1. The segment at 1–185 (MSLLMITENV…EPEANKFDST (185 aa)) is interaction with microtubules. Position 42 is a phosphoserine; by DYRK2 (Ser42). The segment at 87 to 183 (QHELPSSEGE…VTEPEANKFD (97 aa)) is disordered. A compositionally biased stretch (basic and acidic residues) spans 145–169 (HSDRGKAVRSREKKEQSKGREEKNK). 249-256 (GPPGTGKT) lines the ATP pocket.

The protein belongs to the AAA ATPase family. Katanin p60 subunit A1 subfamily. In terms of assembly, can homooligomerize into hexameric rings, which may be promoted by interaction with microtubules. Interacts with KATNB1, which may serve as a targeting subunit. Interacts with ASPM; the katanin complex formation KATNA1:KATNB1 is required for the association of ASPM. Interacts with dynein and NDEL1. Associates with the E3 ligase complex containing DYRK2, EDD/UBR5, DDB1 and DCAF1 proteins (EDVP complex). Interacts with KLHL42 (via the kelch domains). Interacts with CUL3; the interaction is enhanced by KLHL42. Interacts with KATNB1 and KATNBL1. Phosphorylation by DYRK2 triggers ubiquitination and subsequent degradation. Post-translationally, ubiquitinated by the BCR(KLHL42) E3 ubiquitin ligase complex, leading to its proteasomal degradation. Ubiquitinated by the EDVP E3 ligase complex and subsequently targeted for proteasomal degradation.

The protein localises to the cytoplasm. Its subcellular location is the midbody. It localises to the cytoskeleton. It is found in the microtubule organizing center. The protein resides in the centrosome. The protein localises to the spindle pole. Its subcellular location is the spindle. The catalysed reaction is n ATP + n H2O + a microtubule = n ADP + n phosphate + (n+1) alpha/beta tubulin heterodimers.. ATPase activity is stimulated by microtubules, which promote homooligomerization. ATP-dependent microtubule severing is stimulated by interaction with KATNB1. In terms of biological role, catalytic subunit of a complex which severs microtubules in an ATP-dependent manner. Microtubule severing may promote rapid reorganization of cellular microtubule arrays and the release of microtubules from the centrosome following nucleation. Microtubule release from the mitotic spindle poles may allow depolymerization of the microtubule end proximal to the spindle pole, leading to poleward microtubule flux and poleward motion of chromosome. Microtubule release within the cell body of neurons may be required for their transport into neuronal processes by microtubule-dependent motor proteins. This transport is required for axonal growth. This is Katanin p60 ATPase-containing subunit A1 (Katna1) from Rattus norvegicus (Rat).